The following is a 338-amino-acid chain: Anthranilate phosphoribosyltransferase (338 aa).

5-phospho-alpha-D-ribose 1-diphosphate is bound by residues Gly-81, 84–85, Thr-89, 91–94, 109–117, and Ala-121; these read GD, NIST, and KHGNRALSS. Position 81 (Gly-81) interacts with anthranilate. Ser-93 contacts Mg(2+). Residue Asn-112 coordinates anthranilate. Arg-167 contributes to the anthranilate binding site. The Mg(2+) site is built by Asp-225 and Glu-226.

The protein belongs to the anthranilate phosphoribosyltransferase family. Homodimer. Mg(2+) serves as cofactor.

It catalyses the reaction N-(5-phospho-beta-D-ribosyl)anthranilate + diphosphate = 5-phospho-alpha-D-ribose 1-diphosphate + anthranilate. It functions in the pathway amino-acid biosynthesis; L-tryptophan biosynthesis; L-tryptophan from chorismate: step 2/5. In terms of biological role, catalyzes the transfer of the phosphoribosyl group of 5-phosphorylribose-1-pyrophosphate (PRPP) to anthranilate to yield N-(5'-phosphoribosyl)-anthranilate (PRA). The polypeptide is Anthranilate phosphoribosyltransferase (Rhizobium johnstonii (strain DSM 114642 / LMG 32736 / 3841) (Rhizobium leguminosarum bv. viciae)).